The chain runs to 419 residues: CinA-like protein (419 aa).

Belongs to the CinA family.

This is CinA-like protein from Synechococcus sp. (strain CC9902).